A 374-amino-acid polypeptide reads, in one-letter code: Chaperone protein DnaJ (374 aa).

The 66-residue stretch at Asp5–Gly70 folds into the J domain. The CR-type zinc finger occupies Gly133 to Tyr211. Residues Cys146, Cys149, Cys163, Cys166, Cys185, Cys188, Cys199, and Cys202 each contribute to the Zn(2+) site. 4 CXXCXGXG motif repeats span residues Cys146–Gly153, Cys163–Gly170, Cys185–Gly192, and Cys199–Gly206.

It belongs to the DnaJ family. Homodimer. It depends on Zn(2+) as a cofactor.

It localises to the cytoplasm. In terms of biological role, participates actively in the response to hyperosmotic and heat shock by preventing the aggregation of stress-denatured proteins and by disaggregating proteins, also in an autonomous, DnaK-independent fashion. Unfolded proteins bind initially to DnaJ; upon interaction with the DnaJ-bound protein, DnaK hydrolyzes its bound ATP, resulting in the formation of a stable complex. GrpE releases ADP from DnaK; ATP binding to DnaK triggers the release of the substrate protein, thus completing the reaction cycle. Several rounds of ATP-dependent interactions between DnaJ, DnaK and GrpE are required for fully efficient folding. Also involved, together with DnaK and GrpE, in the DNA replication of plasmids through activation of initiation proteins. This Pseudomonas fluorescens (strain ATCC BAA-477 / NRRL B-23932 / Pf-5) protein is Chaperone protein DnaJ.